The sequence spans 604 residues: Elongation factor 4 (604 aa).

Residues 7-189 (SRLRNFCIIA…AVVDRIPPPA (183 aa)) enclose the tr-type G domain. GTP-binding positions include 19–24 (DHGKST) and 136–139 (NKID).

Belongs to the TRAFAC class translation factor GTPase superfamily. Classic translation factor GTPase family. LepA subfamily.

It localises to the cell inner membrane. The catalysed reaction is GTP + H2O = GDP + phosphate + H(+). Functionally, required for accurate and efficient protein synthesis under certain stress conditions. May act as a fidelity factor of the translation reaction, by catalyzing a one-codon backward translocation of tRNAs on improperly translocated ribosomes. Back-translocation proceeds from a post-translocation (POST) complex to a pre-translocation (PRE) complex, thus giving elongation factor G a second chance to translocate the tRNAs correctly. Binds to ribosomes in a GTP-dependent manner. The protein is Elongation factor 4 of Prochlorococcus marinus (strain MIT 9303).